The primary structure comprises 158 residues: Rhombotin-2 (158 aa).

LIM zinc-binding domains are found at residues 30–89 and 94–153; these read CGGC…RLFG and CASC…EWTK.

In terms of assembly, interacts via its LIM domains with ELF2 and LDB1. Also interacts with basic helix-loop-helix protein TAL1/SCL and can assemble in a complex with LMO2 and TAL1/SCL. Interacts with BEX2 and KDM5A.

Its subcellular location is the nucleus. Functionally, acts with TAL1/SCL to regulate red blood cell development. Also acts with LDB1 to maintain erythroid precursors in an immature state. In Homo sapiens (Human), this protein is Rhombotin-2 (LMO2).